Reading from the N-terminus, the 250-residue chain is Coproheme decarboxylase (250 aa).

Fe-coproporphyrin III-binding positions include arginine 131, 145 to 149, histidine 172, and glutamine 185; that span reads YPMNK. Residue tyrosine 145 is part of the active site.

Belongs to the ChdC family. Type 1 subfamily. Fe-coproporphyrin III is required as a cofactor.

The enzyme catalyses Fe-coproporphyrin III + 2 H2O2 + 2 H(+) = heme b + 2 CO2 + 4 H2O. The catalysed reaction is Fe-coproporphyrin III + H2O2 + H(+) = harderoheme III + CO2 + 2 H2O. It catalyses the reaction harderoheme III + H2O2 + H(+) = heme b + CO2 + 2 H2O. Its pathway is porphyrin-containing compound metabolism; protoheme biosynthesis. In terms of biological role, involved in coproporphyrin-dependent heme b biosynthesis. Catalyzes the decarboxylation of Fe-coproporphyrin III (coproheme) to heme b (protoheme IX), the last step of the pathway. The reaction occurs in a stepwise manner with a three-propionate intermediate. This is Coproheme decarboxylase from Staphylococcus aureus (strain bovine RF122 / ET3-1).